Here is a 199-residue protein sequence, read N- to C-terminus: uncharacterized protein (199 aa).

Positions 1–23 are cleaved as a signal peptide; that stretch reads MKPGCTLFFLLCSALTVTTEAHA.

This is an uncharacterized protein from Escherichia coli (strain K12).